Reading from the N-terminus, the 84-residue chain is Small ribosomal subunit protein bS18 (84 aa).

Belongs to the bacterial ribosomal protein bS18 family. In terms of assembly, part of the 30S ribosomal subunit. Forms a tight heterodimer with protein bS6.

In terms of biological role, binds as a heterodimer with protein bS6 to the central domain of the 16S rRNA, where it helps stabilize the platform of the 30S subunit. The sequence is that of Small ribosomal subunit protein bS18 from Maricaulis maris (strain MCS10) (Caulobacter maris).